Consider the following 348-residue polypeptide: Organic solute transporter alpha-like protein 3 (348 aa).

The Extracellular segment spans residues 1-49; the sequence is MAKEHGAMRSVLNLIGSVMLPQDTSNCSDRHDTPSAPEFLSHLQPFQTV. Asparagine 26 carries N-linked (GlcNAc...) asparagine glycosylation. A helical membrane pass occupies residues 50–70; that stretch reads LLSIASFSTTIVLCLSLIHWF. Residues 71–84 lie on the Cytoplasmic side of the membrane; it reads YVYKYVSIEKRRNK. Residues 85–105 traverse the membrane as a helical segment; that stretch reads LYWLIAVFPVACSCSFIAMCV. Residues 106-109 are Extracellular-facing; that stretch reads PRTA. The helical transmembrane segment at 110–130 threads the bilayer; the sequence is VILTCIGVLYYLMCLFVIVSL. The Cytoplasmic segment spans residues 131–180; sequence ARHLFGGRESFSTCLQYDDRPIDFRSPPFCCIIPKLPTARSTEKNIRRLE. A helical transmembrane segment spans residues 181–201; that stretch reads WCVLQAPIVRSIIIFLDVVAV. At 202 to 213 the chain is on the extracellular side; sequence AEMREDATPYIR. Residues 214–234 traverse the membrane as a helical segment; it reads YSDMASLCSLLLAIFGVHTLA. Residues 235–240 are Cytoplasmic-facing; it reads RVTSNK. Residues 241–261 traverse the membrane as a helical segment; it reads LSAYCFMSMFRLVDISLLFFS. Over 262–291 the chain is Extracellular; the sequence is AQQPMIFQNVLLRFNLISCGPLLNAQENAY. A helical transmembrane segment spans residues 292–312; sequence FVCNFIITCEMLLLSVLATWL. Over 313 to 348 the chain is Cytoplasmic; the sequence is LAPRHNAMFDAYRPSMALSETTASLNETEQSMILDH.

This sequence belongs to the OST-alpha family.

It localises to the cell membrane. In terms of biological role, probable transporter. The chain is Organic solute transporter alpha-like protein 3 (osta-3) from Caenorhabditis elegans.